The chain runs to 332 residues: Protein FAM131B (332 aa).

A disordered region spans residues 1-22 (MDSTSSLHGSSLHRPSTEQTRT). 3 positions are modified to phosphoserine: Ser-47, Ser-114, and Ser-117. The tract at residues 221–332 (LGPAFDDSQP…FDEEEGDANN (112 aa)) is disordered. Composition is skewed to basic and acidic residues over residues 272–281 (PVEEEKRPLA) and 288–302 (AGCRDLESLSPREDP). Phosphoserine is present on residues Ser-295, Ser-297, and Ser-313. Thr-316 bears the Phosphothreonine mark. Phosphoserine is present on residues Ser-317, Ser-318, and Ser-322. Over residues 323–332 (FDEEEGDANN) the composition is skewed to acidic residues.

This sequence belongs to the FAM131 family.

The protein is Protein FAM131B (Fam131b) of Rattus norvegicus (Rat).